The following is a 166-amino-acid chain: Peptide deformylase (166 aa).

Positions 88 and 130 each coordinate Fe cation. The active site involves glutamate 131. Histidine 134 is a binding site for Fe cation.

This sequence belongs to the polypeptide deformylase family. The cofactor is Fe(2+).

The enzyme catalyses N-terminal N-formyl-L-methionyl-[peptide] + H2O = N-terminal L-methionyl-[peptide] + formate. In terms of biological role, removes the formyl group from the N-terminal Met of newly synthesized proteins. Requires at least a dipeptide for an efficient rate of reaction. N-terminal L-methionine is a prerequisite for activity but the enzyme has broad specificity at other positions. The sequence is that of Peptide deformylase from Caldicellulosiruptor bescii (strain ATCC BAA-1888 / DSM 6725 / KCTC 15123 / Z-1320) (Anaerocellum thermophilum).